We begin with the raw amino-acid sequence, 110 residues long: Nucleoid-associated protein KPK_4227 (110 aa).

A disordered region spans residues 1–22; sequence MFGGKGGLGNLMKQAQQMQDKM.

The protein belongs to the YbaB/EbfC family. In terms of assembly, homodimer.

Its subcellular location is the cytoplasm. It localises to the nucleoid. Functionally, binds to DNA and alters its conformation. May be involved in regulation of gene expression, nucleoid organization and DNA protection. The polypeptide is Nucleoid-associated protein KPK_4227 (Klebsiella pneumoniae (strain 342)).